A 178-amino-acid chain; its full sequence is CASP-like protein 2A2 (178 aa).

The Cytoplasmic segment spans residues 1-22; sequence MDKTDQTAIDESALVLNRTEKS. A helical transmembrane segment spans residues 23–43; that stretch reads AEAVLRVASMALSITGLVIMI. At 44–69 the chain is on the extracellular side; sequence KNSISNEFGSVSYSNIGAFMYLVSAN. A helical membrane pass occupies residues 70 to 90; that stretch reads GVCAAYSLLSALAILALPCPI. Over 91-96 the chain is Cytoplasmic; the sequence is SKVQVR. A helical membrane pass occupies residues 97–117; sequence TLFLLDQVVTYVVLAAGAVSA. The Extracellular portion of the chain corresponds to 118–145; it reads ETVYLAYYGNIPITWSSACDSYGSFCHN. A helical transmembrane segment spans residues 146–166; it reads ALISVVFTFVVSLLYMLLSLI. Over 167–178 the chain is Cytoplasmic; that stretch reads SSYRLFTRFEAP.

Belongs to the Casparian strip membrane proteins (CASP) family. As to quaternary structure, homodimer and heterodimers. As to expression, mostly expressed in flowers and buds and, to a lower extent, in roots and yellow siliques. Localized in the floral organ abscission zone.

It localises to the cell membrane. Its function is as follows. Involved in floral organ shedding. This Arabidopsis thaliana (Mouse-ear cress) protein is CASP-like protein 2A2.